Reading from the N-terminus, the 307-residue chain is Tyrosine recombinase XerC (307 aa).

In terms of domain architecture, Core-binding (CB) spans 9-95 (ETLSLAIDSF…ALRSFLDWQV (87 aa)). In terms of domain architecture, Tyr recombinase spans 116 to 296 (HLPKNMDVDE…DFQHLAKVYD (181 aa)). Active-site residues include arginine 155, lysine 179, histidine 248, arginine 251, and histidine 274. Residue tyrosine 283 is the O-(3'-phospho-DNA)-tyrosine intermediate of the active site.

Belongs to the 'phage' integrase family. XerC subfamily. Forms a cyclic heterotetrameric complex composed of two molecules of XerC and two molecules of XerD, in which XerC interacts with XerD via its C-terminal region, XerD interacts with XerC via its C-terminal region and so on.

Its subcellular location is the cytoplasm. With respect to regulation, ftsK may regulate the catalytic switch between XerC and XerD in the heterotetrameric complex during the two steps of the recombination process. Functionally, site-specific tyrosine recombinase, which acts by catalyzing the cutting and rejoining of the recombining DNA molecules. Binds cooperatively to specific DNA consensus sequences that are separated from XerD binding sites by a short central region, forming the heterotetrameric XerC-XerD complex that recombines DNA substrates. The complex is essential to convert dimers of the bacterial chromosome into monomers to permit their segregation at cell division. It also contributes to the segregational stability of plasmids. In the complex XerC specifically exchanges the top DNA strands. This Proteus mirabilis protein is Tyrosine recombinase XerC.